The sequence spans 319 residues: Acetyl-coenzyme A carboxylase carboxyl transferase subunit alpha (319 aa).

A CoA carboxyltransferase C-terminal domain is found at H38–A293.

Belongs to the AccA family. As to quaternary structure, acetyl-CoA carboxylase is a heterohexamer composed of biotin carboxyl carrier protein (AccB), biotin carboxylase (AccC) and two subunits each of ACCase subunit alpha (AccA) and ACCase subunit beta (AccD).

It is found in the cytoplasm. The enzyme catalyses N(6)-carboxybiotinyl-L-lysyl-[protein] + acetyl-CoA = N(6)-biotinyl-L-lysyl-[protein] + malonyl-CoA. The protein operates within lipid metabolism; malonyl-CoA biosynthesis; malonyl-CoA from acetyl-CoA: step 1/1. In terms of biological role, component of the acetyl coenzyme A carboxylase (ACC) complex. First, biotin carboxylase catalyzes the carboxylation of biotin on its carrier protein (BCCP) and then the CO(2) group is transferred by the carboxyltransferase to acetyl-CoA to form malonyl-CoA. This chain is Acetyl-coenzyme A carboxylase carboxyl transferase subunit alpha, found in Stenotrophomonas maltophilia (strain K279a).